A 236-amino-acid polypeptide reads, in one-letter code: Octanoyltransferase (236 aa).

One can recognise a BPL/LPL catalytic domain in the interval 36-220 (DQVPDTVLLL…HLAAVLGASS (185 aa)). Residues 76 to 83 (RGGKITWH), 150 to 152 (AIG), and 163 to 165 (GFA) each bind substrate. Cys-181 (acyl-thioester intermediate) is an active-site residue.

Belongs to the LipB family.

The protein resides in the cytoplasm. The catalysed reaction is octanoyl-[ACP] + L-lysyl-[protein] = N(6)-octanoyl-L-lysyl-[protein] + holo-[ACP] + H(+). Its pathway is protein modification; protein lipoylation via endogenous pathway; protein N(6)-(lipoyl)lysine from octanoyl-[acyl-carrier-protein]: step 1/2. Catalyzes the transfer of endogenously produced octanoic acid from octanoyl-acyl-carrier-protein onto the lipoyl domains of lipoate-dependent enzymes. Lipoyl-ACP can also act as a substrate although octanoyl-ACP is likely to be the physiological substrate. The polypeptide is Octanoyltransferase (Thermobifida fusca (strain YX)).